A 164-amino-acid chain; its full sequence is C-phycoerythrin alpha chain (164 aa).

(2R,3E)-phycoerythrobilin-binding residues include C82 and C139.

Belongs to the phycobiliprotein family. As to quaternary structure, heterodimer of an alpha and a beta chain. Post-translationally, contains two covalently linked bilin chromophores.

The protein resides in the cellular thylakoid membrane. Its function is as follows. Light-harvesting photosynthetic bile pigment-protein from the phycobiliprotein complex. The protein is C-phycoerythrin alpha chain (cpeA) of Pseudanabaena tenuis (strain PCC 7409).